We begin with the raw amino-acid sequence, 148 residues long: UPF0179 protein Mboo_1959 (148 aa).

Belongs to the UPF0179 family.

This is UPF0179 protein Mboo_1959 from Methanoregula boonei (strain DSM 21154 / JCM 14090 / 6A8).